We begin with the raw amino-acid sequence, 449 residues long: MSGLLYALLIIPMIGIFFILSFDSYNFNITSNNSNSGSFSEAGAGKNSGGELLKVLVINNELNFYKKIAFITTIMNLIVSLIIYILFDFSTNQFQFVQDALELSVYNIYLGVDGLSIYFVLLTTIIMPIALISNWNSITHNIKAYLIIILLLETLLLAVFLVLDVLLFYIFFESILPPLFILIGLFGSSNKVRASFYIFLYTFNLKCKRAKYRGSPKALVTKVQHESVELAWLMTQGMVKSLVDIWVIAVLSHPCLRTESKQEGVKEQRVDGSSSSRNLEFVRCTLVAGKPVLGRKIHHCPCGPASSKLMKVQGYYNITTQAATYTHPLSTLDPWFITGFVDAEGCFMIGLTKSELYRSGYQVTAIFKISLRRTRKDYTLLCQIRDYFGIGIITKHGETTLQYMVRSIKDLNVILSHFDAYPLFSQKRSDYILFKQAIVLIKNKEHLTK.

The protein localises to the mitochondrion. This is an uncharacterized protein from Podospora anserina (strain S / ATCC MYA-4624 / DSM 980 / FGSC 10383) (Pleurage anserina).